The chain runs to 386 residues: L-lactate dehydrogenase (386 aa).

The FMN hydroxy acid dehydrogenase domain maps to 1–380 (MIISAASDYR…SGDALSRVTR (380 aa)). A substrate-binding site is contributed by Tyr24. Positions 106 and 127 each coordinate FMN. Tyr129 is a binding site for substrate. Thr155 serves as a coordination point for FMN. Arg164 lines the substrate pocket. Position 251 (Lys251) interacts with FMN. His275 serves as the catalytic Proton acceptor. Residue Arg278 coordinates substrate. 306–330 (DSGIRSGLDVVRMLALGADAVLLGR) lines the FMN pocket.

This sequence belongs to the FMN-dependent alpha-hydroxy acid dehydrogenase family. Requires FMN as cofactor.

The protein resides in the cell inner membrane. It catalyses the reaction (S)-lactate + A = pyruvate + AH2. Catalyzes the conversion of L-lactate to pyruvate. Is coupled to the respiratory chain. The chain is L-lactate dehydrogenase from Xanthomonas campestris pv. campestris (strain 8004).